We begin with the raw amino-acid sequence, 714 residues long: Cyclomaltodextrin glucanotransferase (714 aa).

The first 27 residues, 1–27, serve as a signal peptide directing secretion; the sequence is MKSRYKRLTSLALSLSMALGISLPAWA. An A1 region spans residues 28–165; that stretch reads SPDTSVDNKV…NIKVVIDFAP (138 aa). The Ca(2+) site is built by Asp-54, Asn-59, Asn-60, Gly-78, and Asp-80. Residue 127-128 coordinates substrate; the sequence is YW. Asn-166 contacts Ca(2+). The tract at residues 166 to 229 is b; sequence NHTSPADRDN…NLYDLADINH (64 aa). Position 167 (His-167) interacts with substrate. Ile-217 provides a ligand contact to Ca(2+). Residue 220-223 coordinates substrate; that stretch reads NLYD. Asp-226 is a binding site for Ca(2+). The A2 stretch occupies residues 230 to 434; sequence NNNAMDAYFK…LRKSNPAIAY (205 aa). Arg-254 provides a ligand contact to substrate. The Nucleophile role is filled by Asp-256. 259-260 provides a ligand contact to substrate; it reads KH. Residue His-260 participates in Ca(2+) binding. Glu-285 functions as the Proton donor in the catalytic mechanism. Residues His-355, Asp-399, and Arg-403 each contribute to the substrate site. The c stretch occupies residues 435-523; that stretch reads GTTTERWVNN…GTAVWQYTAP (89 aa). Residues 524–610 form a d region; it reads ETSPAIGNVG…SNTFKSFNVL (87 aa). The 81-residue stretch at 527 to 607 folds into the IPT/TIG domain; it reads PAIGNVGPTM…GTASNTFKSF (81 aa). One can recognise a CBM20 domain in the interval 609–714; the sequence is VLTGDQVTVR…VGTVTVDWQN (106 aa). The tract at residues 611–714 is e; that stretch reads TGDQVTVRFL…VGTVTVDWQN (104 aa).

The protein belongs to the glycosyl hydrolase 13 family. Monomer. It depends on Ca(2+) as a cofactor.

The protein resides in the secreted. The enzyme catalyses Cyclizes part of a (1-&gt;4)-alpha-D-glucan chain by formation of a (1-&gt;4)-alpha-D-glucosidic bond.. This is Cyclomaltodextrin glucanotransferase (cgtM) from Paenibacillus macerans (Bacillus macerans).